The following is a 162-amino-acid chain: Protein cornichon homolog 2 (162 aa).

At 1-10 (MAFTFAAFCY) the chain is on the cytoplasmic side. Residues 11–31 (MLTLVLCASLIFFIIWHIIAF) traverse the membrane as a helical segment. Over 32-72 (DDLRTDFKDPIEQGNPSRARERIKNVERVCCLLRKLVVPEY) the chain is Lumenal. The chain crosses the membrane as a helical span at residues 73–93 (CIHGLFCLMFMCAAEWVTLGL). Residues 94-138 (NIPLLFYHLWRYFHRPADGSEVMFDPVSIMNVDILNYCQKEAWCK) lie on the Cytoplasmic side of the membrane. The chain crosses the membrane as a helical span at residues 139–161 (LAFYLLSFFYYLYRVGATVRYVS). Residue Ala162 is a topological domain, lumenal.

It belongs to the cornichon family.

The protein localises to the membrane. Functionally, regulates the trafficking and gating properties of AMPA-selective glutamate receptors (AMPARs). The chain is Protein cornichon homolog 2 (cnih2) from Xenopus laevis (African clawed frog).